A 201-amino-acid polypeptide reads, in one-letter code: ATP-dependent Clp protease proteolytic subunit 2 (201 aa).

Serine 100 functions as the Nucleophile in the catalytic mechanism. Histidine 125 is a catalytic residue.

The protein belongs to the peptidase S14 family. Fourteen ClpP subunits assemble into 2 heptameric rings which stack back to back to give a disk-like structure with a central cavity, resembling the structure of eukaryotic proteasomes.

The protein localises to the cytoplasm. The enzyme catalyses Hydrolysis of proteins to small peptides in the presence of ATP and magnesium. alpha-casein is the usual test substrate. In the absence of ATP, only oligopeptides shorter than five residues are hydrolyzed (such as succinyl-Leu-Tyr-|-NHMec, and Leu-Tyr-Leu-|-Tyr-Trp, in which cleavage of the -Tyr-|-Leu- and -Tyr-|-Trp bonds also occurs).. Cleaves peptides in various proteins in a process that requires ATP hydrolysis. Has a chymotrypsin-like activity. Plays a major role in the degradation of misfolded proteins. This chain is ATP-dependent Clp protease proteolytic subunit 2, found in Corynebacterium glutamicum (strain ATCC 13032 / DSM 20300 / JCM 1318 / BCRC 11384 / CCUG 27702 / LMG 3730 / NBRC 12168 / NCIMB 10025 / NRRL B-2784 / 534).